Reading from the N-terminus, the 98-residue chain is Integration host factor subunit beta (98 aa).

Belongs to the bacterial histone-like protein family. In terms of assembly, heterodimer of an alpha and a beta chain.

In terms of biological role, this protein is one of the two subunits of integration host factor, a specific DNA-binding protein that functions in genetic recombination as well as in transcriptional and translational control. This chain is Integration host factor subunit beta, found in Gluconacetobacter diazotrophicus (strain ATCC 49037 / DSM 5601 / CCUG 37298 / CIP 103539 / LMG 7603 / PAl5).